The primary structure comprises 372 residues: MALNDFHVSEPYTLGIELEMQVINPPGYDLSQDSSTLIDAVKPQLTAGEIKHDITESMLEMATGVCRDIDQAAAQLSAMQHVILQAASEHHLGICGGGTHPFQKWQRQEVCDNERYQRTLENFGYLIQQATVFGQHVHVGCANGDDAIYLLHGLSHFVPHFIALSAASPYMQGSDTRFACARLNIFSAFPDNGPMPWVSNWQEFAGLFRRLSYTTMIDSIKDLHWDIRPSPAFGTVEVRVMDTPLTLDHAINMAGLIQATAHWLLTERPFKPQEQDYLLYKFNRFQACRYGLEGVLTDAYTGDRRRLADDTLRLLDNVTPSARKLGADSAIDALRLQVKKGGNEAQYMREFIADGGSLIGLVQKHCEIWAGQ.

It belongs to the glutamate--cysteine ligase type 2 family. YbdK subfamily. As to quaternary structure, homodimer.

The enzyme catalyses L-cysteine + L-glutamate + ATP = gamma-L-glutamyl-L-cysteine + ADP + phosphate + H(+). Functionally, ATP-dependent carboxylate-amine ligase which exhibits weak glutamate--cysteine ligase activity. In Salmonella heidelberg (strain SL476), this protein is Putative glutamate--cysteine ligase 2 (ybdK).